Reading from the N-terminus, the 458-residue chain is Glycine--tRNA ligase (458 aa).

2 residues coordinate substrate: arginine 97 and glutamate 171. ATP contacts are provided by residues 203–205 (RNE), 213–218 (FRTREF), 287–288 (EL), and 331–334 (GADR). 218–222 (FEQME) serves as a coordination point for substrate. 327 to 331 (EPSLG) is a substrate binding site.

Belongs to the class-II aminoacyl-tRNA synthetase family. As to quaternary structure, homodimer.

The protein localises to the cytoplasm. It carries out the reaction tRNA(Gly) + glycine + ATP = glycyl-tRNA(Gly) + AMP + diphosphate. Its function is as follows. Catalyzes the attachment of glycine to tRNA(Gly). This is Glycine--tRNA ligase from Bacillus thuringiensis subsp. konkukian (strain 97-27).